The primary structure comprises 791 residues: Protein FAM47A (791 aa).

Disordered regions lie at residues 195–257 (PVSH…TRRR), 274–409 (EDAR…TGVC), and 449–573 (VKKT…SEPP). Composition is skewed to basic and acidic residues over residues 274 to 288 (EDARAPCEGREKTTD) and 333 to 342 (GESHLRLEHS). The segment covering 349-358 (SLRSEPSETG) has biased composition (polar residues). A compositionally biased stretch (basic and acidic residues) spans 449–462 (VKKTKEPTEPHKSP).

It belongs to the FAM47 family.

The protein is Protein FAM47A (FAM47A) of Homo sapiens (Human).